A 176-amino-acid chain; its full sequence is NAD(P)H-quinone oxidoreductase subunit 6, chloroplastic (176 aa).

The next 5 membrane-spanning stretches (helical) occupy residues 10–30, 32–52, 61–81, 92–112, and 152–172; these read ILLV…VLLT, PISS…FYIP, AQLL…VMFM, LWTI…FSLI, and FYLP…GAIA.

The protein belongs to the complex I subunit 6 family. As to quaternary structure, NDH is composed of at least 16 different subunits, 5 of which are encoded in the nucleus.

It is found in the plastid. It localises to the chloroplast thylakoid membrane. It catalyses the reaction a plastoquinone + NADH + (n+1) H(+)(in) = a plastoquinol + NAD(+) + n H(+)(out). The enzyme catalyses a plastoquinone + NADPH + (n+1) H(+)(in) = a plastoquinol + NADP(+) + n H(+)(out). In terms of biological role, NDH shuttles electrons from NAD(P)H:plastoquinone, via FMN and iron-sulfur (Fe-S) centers, to quinones in the photosynthetic chain and possibly in a chloroplast respiratory chain. The immediate electron acceptor for the enzyme in this species is believed to be plastoquinone. Couples the redox reaction to proton translocation, and thus conserves the redox energy in a proton gradient. This is NAD(P)H-quinone oxidoreductase subunit 6, chloroplastic (ndhG) from Chloranthus spicatus (Chulantree).